Reading from the N-terminus, the 138-residue chain is 2-amino-3-carboxymuconate-6-semialdehyde decarboxylase (138 aa).

Residues histidine 6 and histidine 8 each coordinate Zn(2+). Residue arginine 47 participates in substrate binding. Zn(2+)-binding residues include histidine 70 and aspartate 126.

Belongs to the metallo-dependent hydrolases superfamily. ACMSD family. In terms of assembly, monomer.

The enzyme catalyses 2-amino-3-carboxymuconate 6-semialdehyde + H(+) = 2-aminomuconate 6-semialdehyde + CO2. It participates in secondary metabolite metabolism; quinolate metabolism. Functionally, converts alpha-amino-beta-carboxymuconate-epsilon-semialdehyde (ACMS) to alpha-aminomuconate semialdehyde (AMS). ACMS can be converted non-enzymatically to quinolate (QA), a key precursor of NAD, and a potent endogenous excitotoxin of neuronal cells which is implicated in the pathogenesis of various neurodegenerative disorders. In the presence of ACMSD, ACMS is converted to AMS, a benign catabolite. ACMSD ultimately controls the metabolic fate of tryptophan catabolism along the kynurenine pathway. This Sus scrofa (Pig) protein is 2-amino-3-carboxymuconate-6-semialdehyde decarboxylase (ACMSD).